The sequence spans 258 residues: 4-hydroxy-tetrahydrodipicolinate reductase (258 aa).

Residues 8-13 (GVTGRM), 93-95 (GTT), and 117-120 (AANF) contribute to the NAD(+) site. Histidine 149 serves as the catalytic Proton donor/acceptor. (S)-2,3,4,5-tetrahydrodipicolinate is bound at residue histidine 150. Lysine 153 (proton donor) is an active-site residue. 159–160 (GT) serves as a coordination point for (S)-2,3,4,5-tetrahydrodipicolinate.

Belongs to the DapB family.

The protein resides in the cytoplasm. The catalysed reaction is (S)-2,3,4,5-tetrahydrodipicolinate + NAD(+) + H2O = (2S,4S)-4-hydroxy-2,3,4,5-tetrahydrodipicolinate + NADH + H(+). It carries out the reaction (S)-2,3,4,5-tetrahydrodipicolinate + NADP(+) + H2O = (2S,4S)-4-hydroxy-2,3,4,5-tetrahydrodipicolinate + NADPH + H(+). It participates in amino-acid biosynthesis; L-lysine biosynthesis via DAP pathway; (S)-tetrahydrodipicolinate from L-aspartate: step 4/4. Catalyzes the conversion of 4-hydroxy-tetrahydrodipicolinate (HTPA) to tetrahydrodipicolinate. The protein is 4-hydroxy-tetrahydrodipicolinate reductase of Thermomicrobium roseum (strain ATCC 27502 / DSM 5159 / P-2).